Here is a 425-residue protein sequence, read N- to C-terminus: Dihydroorotase (425 aa).

2 residues coordinate Zn(2+): histidine 61 and histidine 63. Residues 63–65 and asparagine 95 contribute to the substrate site; that span reads HLR. Residues aspartate 153, histidine 180, and histidine 233 each coordinate Zn(2+). Asparagine 279 is a substrate binding site. Position 306 (aspartate 306) interacts with Zn(2+). The active site involves aspartate 306. Histidine 310 contacts substrate.

Belongs to the metallo-dependent hydrolases superfamily. DHOase family. Class I DHOase subfamily. Zn(2+) serves as cofactor.

It carries out the reaction (S)-dihydroorotate + H2O = N-carbamoyl-L-aspartate + H(+). It participates in pyrimidine metabolism; UMP biosynthesis via de novo pathway; (S)-dihydroorotate from bicarbonate: step 3/3. In terms of biological role, catalyzes the reversible cyclization of carbamoyl aspartate to dihydroorotate. The sequence is that of Dihydroorotase from Geobacter sp. (strain M21).